Reading from the N-terminus, the 196-residue chain is Protein GrpE (196 aa).

The disordered stretch occupies residues 1-41 (MSSKEQKTPEGQAPEEIITEQHDDVEAVEPEVSAEQVDPRD).

The protein belongs to the GrpE family. As to quaternary structure, homodimer.

It is found in the cytoplasm. In terms of biological role, participates actively in the response to hyperosmotic and heat shock by preventing the aggregation of stress-denatured proteins, in association with DnaK and GrpE. It is the nucleotide exchange factor for DnaK and may function as a thermosensor. Unfolded proteins bind initially to DnaJ; upon interaction with the DnaJ-bound protein, DnaK hydrolyzes its bound ATP, resulting in the formation of a stable complex. GrpE releases ADP from DnaK; ATP binding to DnaK triggers the release of the substrate protein, thus completing the reaction cycle. Several rounds of ATP-dependent interactions between DnaJ, DnaK and GrpE are required for fully efficient folding. In Klebsiella pneumoniae (strain 342), this protein is Protein GrpE.